Here is a 482-residue protein sequence, read N- to C-terminus: MIQGTGSNVGKSMLVAGLARALRKRGLSVAPFKPQNMSNNAAVTSDGGEIGRAQALQARAAGLAPHTDMNPVLLKPETDTGAQVIVQGKRRGTRAAGSFMRDKAGLLEATLESFHRLAAQHDIVLIEGAGSPAETNLRKGDIANMGFAEAAGVPVLLVGDIHRGGVIAQIVGTHTVLEPSDRARIKAFAVNRFRGDLSLFDGGRDDIARWTGWPSLGVVPWFWDAWKLPAEDMMDIASHKGGACKVVVPQLERMANFDDLDPLAAEPAVTVEIVPPGRALPGDADLVLIPGSKSTIGDLAYLRTQGWDIDILAHHRRGGHVLGLCGGYQMLGQSIDDPEGVDGHPGKVAGLGLLDVHTVMAGDKRVTLSAARTLEGDLPVSGYEIHMGRTTGPDCARAWLALEGRAEGATSADGRVRGSYLHGLFTSDAFRAQFLSDLGHQSDLDYDAGVEATLDELAAHLEQYMDVEGLLELAEPIPVPES.

Positions A243 to F430 constitute a GATase cobBQ-type domain. Catalysis depends on C325, which acts as the Nucleophile. H422 is an active-site residue.

It belongs to the CobB/CobQ family. CobQ subfamily.

It participates in cofactor biosynthesis; adenosylcobalamin biosynthesis. Functionally, catalyzes amidations at positions B, D, E, and G on adenosylcobyrinic A,C-diamide. NH(2) groups are provided by glutamine, and one molecule of ATP is hydrogenolyzed for each amidation. In Ruegeria sp. (strain TM1040) (Silicibacter sp.), this protein is Cobyric acid synthase.